Consider the following 24-residue polypeptide: Calcium-binding shell glycoprotein P50 (24 aa).

A disordered region spans residues 1–24; the sequence is KDALEHTGFAPKKDGEEHVEWNYN.

Post-translationally, glycosylated. Nacreous and prismatic layers of the shell.

Functionally, calcium-binding. In Unio pictorum (Painter's mussel), this protein is Calcium-binding shell glycoprotein P50.